Here is a 171-residue protein sequence, read N- to C-terminus: UPF0303 protein YPK_1581 (171 aa).

The protein belongs to the UPF0303 family.

In Yersinia pseudotuberculosis serotype O:3 (strain YPIII), this protein is UPF0303 protein YPK_1581.